Reading from the N-terminus, the 309-residue chain is MACKNPKKFFPICNSPILRDGALKGKVALVTGGGTGIGKAIATTFAHLGASVAIAARRMEKLEQTAEEIMKTTGGICEPFRMDIKDPGMVSDTFDKIDKKFGKHPDILVNNAAGNFIMATERLSPNAHGTIIDIVLKGTMNVTTELGKRCIQSKTGASVTSITAAYARSGAPFIVPSAVSKAGVEIMTKSLATEWSKYGLRFNAVSPGPIPTKGAWGRLFSGEMGDVAEKMKELNPEGRSGTPEEVANLVAFISSDHMSFMNGVIIDLDGGQQHFNHGSHMGDFLHTWDQDTWGDVENVIRGRTGKEKP.

NADP(+)-binding positions include 32 to 37 (GGGTGI), R57, and D83. Residue R57 coordinates substrate. F116 and S124 together coordinate substrate. Y166 serves as the catalytic Proton acceptor. Residues K181 and 207 to 210 (PGPI) each bind NADP(+). R218 contributes to the substrate binding site.

It belongs to the short-chain dehydrogenases/reductases (SDR) family. 2,4-dienoyl-CoA reductase subfamily.

The enzyme catalyses a (2E,4E)-dienoyl-CoA + NADPH + H(+) = a 4,5-saturated-(3E)-enoyl-CoA + NADP(+). The catalysed reaction is a (2E,4Z)-dienoyl-CoA + NADPH + H(+) = a 4,5-saturated-(3E)-enoyl-CoA + NADP(+). Auxiliary enzyme of beta-oxidation. It participates in the metabolism of unsaturated fatty enoyl-CoA esters having double bonds in both even- and odd-numbered positions. Catalyzes the NADP-dependent reduction of 2,4-dienoyl-CoA to yield trans-3-enoyl-CoA. This Caenorhabditis elegans protein is Probable 2,4-dienoyl-CoA reductase 3 [(3E)-enoyl-CoA-producing].